The primary structure comprises 196 residues: MKKYLGIVLMALVIAGCTSRVPQTEQPATIEPAVPTPSKPQLPPSESQPLPTPPKIQVPVLDWSAAVTPLVGQMVKTDGIARGSILLLNKLKNNTNGSLQTAQATTALYNALASSGQFTMVSREQLGVARQSLGLSEEDSLESRSKAVGLARYVGAQYVLYADASGDVKSPELSMQLMLVQTGEIVWSGNGTVRQQ.

Positions 1 to 16 (MKKYLGIVLMALVIAG) are cleaved as a signal peptide. The N-palmitoyl cysteine moiety is linked to residue Cys-17. A lipid anchor (S-diacylglycerol cysteine) is attached at Cys-17. Positions 24–54 (TEQPATIEPAVPTPSKPQLPPSESQPLPTPP) are disordered. The span at 34–43 (VPTPSKPQLP) shows a compositional bias: pro residues.

It belongs to the LpoB family. As to quaternary structure, interacts with PBP1b.

It localises to the cell outer membrane. Functionally, regulator of peptidoglycan synthesis that is essential for the function of penicillin-binding protein 1B (PBP1b). In Dickeya dadantii (strain 3937) (Erwinia chrysanthemi (strain 3937)), this protein is Penicillin-binding protein activator LpoB.